The chain runs to 1270 residues: MVDSVGFAEAWRAQFPDSEPPRMELRSVGDIEQELERCKASIRRLEQEVNQERFRMIYLQTLLAKEKKSYDRQRWGFRRAAQPPDGAAEPRASAPRPPPAPADGADPAPVEESEARPDGEGSPSKGRSASARRPAAAASADRDDRGPPTSVAALRSNFEKIRKGPAQPGSADAEKPFYVNVEFHHERGLVKVNDKEVSDRISSLGSQAMQMERKKSQQSAGQGLGEAPRPHYRGRSSESSCGLDGDYEDAELNPRFLKDNLINANGGNRPPWPPLEYQPYQSIYVGGMMVEGEGKSPLLRSQSTSEQEKRLTWPRRSYSPRSFEDSGGGYTPDCSSNENLTSSEEDFSSGQSSRVSPSPTTYRMFRDKSRSPSQNSQQSFDSSSPPTPQCQKRHRQCQVVVSEATIVGVRKTGQIWPSDGDSTFQGEADSSFGTPPGYGCAADQAEEQRRHQDGLPYIDDSPSSSPHLSSKGRGSLASGALDPTKVSELDLEKGLEMRKWVLSGILASEETYLSHLEALLLPMKPLKAAATTSQPVLTSQQIETIFFKVPELYEIHKEFYDGLFPRVQQWSHQQRVGDLFQKLASQLGVYRAFVDNYGVAMETAEKCCQANAQFAEISENLRARSNKDVKDSTTKNSLETLLYKPVDRVTRSTLVLHDLLKHTPSSHPDHSLLQDALRISQNFLSSINEEITPRRQSMTVKKGEHRQLLKDSFMVELVEGARKLRHIFLFTDLLLCTKLKKQSGGKTQQYDCKWYIPLTDLSFQMVDELEALPNIPLVPDEELDALKIKISQIKSDIQREKRANKGSKVMERLRKKLSEQESLLLLMSPSMAFRVHSRNGKSYTFLISSDYERAEWRESIREQQKKCFKSFSLTSVELQMLTNSCVKLQTVHHIPLTINKEDDESPGLYGFLHVIVHSATGFKQSSNLYCTLEVDSFGYFVNKAKTRVYRDTTEPNWNEEFEIELEGSQTLRILCYEKCYNKMKMTKEDGESADKLMGKGQVQLDPQTLQDRDWQRTVIDMNGIEVKLSVKFTSREFSLKRMPSRKQTGVFGVKIAVVTKRERSKVPYIVRQCVEEIERRGMEEVGIYRVSGVATDIQALKAAFDVNNKDVSVMMSEMDVNAIAGTLKLYFRELPEPLFTDEFYPNFAEGIALSDPVAKESCMLNLLLSLPEANLLTFLFLLDHLKRVAEKETVNKMSLHNLATVFGPTLLRPSEKESKLPANPSQPITMTDSWSLEVMSQVQVLLYFLQLEAIPAPDSKRQSILFSTEV.

Met-1 bears the N-acetylmethionine mark. A kinase region spans residues 1–428 (MVDSVGFAEA…DGDSTFQGEA (428 aa)). Positions 28–55 (VGDIEQELERCKASIRRLEQEVNQERFR) form a coiled coil. Residues 67–173 (KKSYDRQRWG…GPAQPGSADA (107 aa)) form a disordered region. Residues 121-139 (GSPSKGRSASARRPAAAAS) are compositionally biased toward low complexity. Phosphoserine occurs at positions 122 and 139. Tyr-178 is modified (phosphotyrosine; by HCK). Positions 198 to 387 (SDRISSLGSQ…QSFDSSSPPT (190 aa)) are binding to ABL SH2-domain. Disordered regions lie at residues 201–249 (ISSL…DYED), 295–396 (KSPL…RHRQ), and 412–481 (TGQI…SGAL). Phosphoserine is present on residues Ser-203, Ser-216, and Ser-237. Phosphotyrosine; by FES is present on Tyr-247. 2 stretches are compositionally biased toward low complexity: residues 348 to 358 (SSGQSSRVSPS) and 371 to 384 (SPSQ…DSSS). Residues Ser-358, Ser-379, and Ser-384 each carry the phosphoserine modification. Position 387 is a phosphothreonine (Thr-387). Phosphoserine is present on residues Ser-461 and Ser-465. Arg-473 is subject to Omega-N-methylarginine. Ser-475 and Ser-487 each carry phosphoserine. The region spanning 497-690 (MRKWVLSGIL…QNFLSSINEE (194 aa)) is the DH domain. Tyr-553 bears the Phosphotyrosine mark. Thr-640 bears the Phosphothreonine mark. Tyr-643 bears the Phosphotyrosine mark. Thr-692 is subject to Phosphothreonine. Residues 707 to 865 (QLLKDSFMVE…WRESIREQQK (159 aa)) form the PH domain. A C2 domain is found at 892-1019 (HHIPLTINKE…QDRDWQRTVI (128 aa)). One can recognise a Rho-GAP domain in the interval 1053 to 1247 (VKIAVVTKRE…VMSQVQVLLY (195 aa)). Ser-1263 is subject to Phosphoserine.

As to quaternary structure, homotetramer. Interacts with PDZK1. Interacts with HCK, FES/FPS, ABL1, PIK3R1 and GRB2. May interact with CCPG1. Interacts with SH2D5. Interacts with DLG4. Post-translationally, autophosphorylated. Phosphorylated by FES/FPS on tyrosine residues, leading to down-regulation of the BCR kinase activity. Phosphorylation at Tyr-178 by HCK is important for interaction with GRB2. In terms of tissue distribution, expressed in brain. In hippocampal subregions, most abundant in the CA1 region and expressed at successively lower levels in the dentate gyrus and the CA3 region.

It localises to the postsynaptic density. Its subcellular location is the cell projection. It is found in the dendritic spine. The protein localises to the axon. The protein resides in the synapse. It catalyses the reaction L-seryl-[protein] + ATP = O-phospho-L-seryl-[protein] + ADP + H(+). The enzyme catalyses L-threonyl-[protein] + ATP = O-phospho-L-threonyl-[protein] + ADP + H(+). Its function is as follows. Protein with a unique structure having two opposing regulatory activities toward small GTP-binding proteins. The C-terminus is a GTPase-activating protein (GAP) domain which stimulates GTP hydrolysis by RAC1, RAC2 and CDC42. Accelerates the intrinsic rate of GTP hydrolysis of RAC1 or CDC42, leading to down-regulation of the active GTP-bound form. The central Dbl homology (DH) domain functions as guanine nucleotide exchange factor (GEF) that modulates the GTPases CDC42, RHOA and RAC1. Promotes the conversion of CDC42, RHOA and RAC1 from the GDP-bound to the GTP-bound form. The amino terminus contains an intrinsic kinase activity. Functions as an important negative regulator of neuronal RAC1 activity. Regulates macrophage functions such as CSF1-directed motility and phagocytosis through the modulation of RAC1 activity. Plays a major role as a RHOA GEF in keratinocytes being involved in focal adhesion formation and keratinocyte differentiation. The sequence is that of Breakpoint cluster region protein from Mus musculus (Mouse).